The sequence spans 71 residues: Large ribosomal subunit protein bL32c (71 aa).

The segment at 1–24 (MAVPKKRTSRSKKKIRKNVRKGKK) is disordered.

This sequence belongs to the bacterial ribosomal protein bL32 family.

Its subcellular location is the plastid. It is found in the chloroplast. The chain is Large ribosomal subunit protein bL32c from Pinus koraiensis (Korean pine).